We begin with the raw amino-acid sequence, 278 residues long: Pantothenate synthetase (278 aa).

28–35 (MGNLHAGH) provides a ligand contact to ATP. The Proton donor role is filled by His35. Gln59 contacts (R)-pantoate. Residue Gln59 coordinates beta-alanine. 145–148 (GKKD) provides a ligand contact to ATP. Gln151 serves as a coordination point for (R)-pantoate. 182–185 (LSSR) is a binding site for ATP.

Belongs to the pantothenate synthetase family. In terms of assembly, homodimer.

Its subcellular location is the cytoplasm. It catalyses the reaction (R)-pantoate + beta-alanine + ATP = (R)-pantothenate + AMP + diphosphate + H(+). It functions in the pathway cofactor biosynthesis; (R)-pantothenate biosynthesis; (R)-pantothenate from (R)-pantoate and beta-alanine: step 1/1. Functionally, catalyzes the condensation of pantoate with beta-alanine in an ATP-dependent reaction via a pantoyl-adenylate intermediate. This Methylobacillus flagellatus (strain ATCC 51484 / DSM 6875 / VKM B-1610 / KT) protein is Pantothenate synthetase.